The sequence spans 643 residues: Protein disulfide-isomerase A4 (643 aa).

Residues 1 to 20 form the signal peptide; it reads MRPRKAWMLVLLLALVQLLA. Thioredoxin domains are found at residues 21–168 and 170–300; these read VASA…EVSQ and NWTP…EFLK. The tract at residues 24 to 54 is disordered; it reads AGAPDEDSTDKEDAIEEDEEEDEDDDDDDDD. A compositionally biased stretch (acidic residues) spans 27-54; that stretch reads PDEDSTDKEDAIEEDEEEDEDDDDDDDD. Residues 90–93 carry the CXXC motif; it reads CGHC. Intrachain disulfides connect Cys-90–Cys-93 and Cys-205–Cys-208. Lys-365 carries the N6-acetyllysine modification. The Thioredoxin 3 domain occupies 503–634; it reads FKKGKLKPVI…LSKFIEEHAT (132 aa). A CXXC motif is present at residues 553-556; sequence CGHC. The cysteines at positions 553 and 556 are disulfide-linked. The short motif at 640 to 643 is the Prevents secretion from ER element; sequence KEEL.

This sequence belongs to the protein disulfide isomerase family. As to quaternary structure, part of a large chaperone multiprotein complex comprising DNAJB11, HSP90B1, HSPA5, HYOU, PDIA2, PDIA4, PDIA6, PPIB, SDF2L1, UGGT1 and very small amounts of ERP29, but not, or at very low levels, CALR nor CANX. Component of a complex containing at least CRELD2, MANF, MATN3 and PDIA4.

Its subcellular location is the endoplasmic reticulum lumen. The protein resides in the melanosome. The enzyme catalyses Catalyzes the rearrangement of -S-S- bonds in proteins.. The chain is Protein disulfide-isomerase A4 (PDIA4) from Bos taurus (Bovine).